A 394-amino-acid chain; its full sequence is NAD(P)H-quinone oxidoreductase subunit H (394 aa).

It belongs to the complex I 49 kDa subunit family. In terms of assembly, NDH-1 can be composed of about 15 different subunits; different subcomplexes with different compositions have been identified which probably have different functions.

The protein localises to the cellular thylakoid membrane. It carries out the reaction a plastoquinone + NADH + (n+1) H(+)(in) = a plastoquinol + NAD(+) + n H(+)(out). The catalysed reaction is a plastoquinone + NADPH + (n+1) H(+)(in) = a plastoquinol + NADP(+) + n H(+)(out). In terms of biological role, NDH-1 shuttles electrons from an unknown electron donor, via FMN and iron-sulfur (Fe-S) centers, to quinones in the respiratory and/or the photosynthetic chain. The immediate electron acceptor for the enzyme in this species is believed to be plastoquinone. Couples the redox reaction to proton translocation, and thus conserves the redox energy in a proton gradient. Cyanobacterial NDH-1 also plays a role in inorganic carbon-concentration. The chain is NAD(P)H-quinone oxidoreductase subunit H from Picosynechococcus sp. (strain ATCC 27264 / PCC 7002 / PR-6) (Agmenellum quadruplicatum).